Here is a 150-residue protein sequence, read N- to C-terminus: D-aminoacyl-tRNA deacylase (150 aa).

A Gly-cisPro motif, important for rejection of L-amino acids motif is present at residues 138 to 139 (GP).

The protein belongs to the DTD family. Homodimer.

The protein localises to the cytoplasm. The catalysed reaction is glycyl-tRNA(Ala) + H2O = tRNA(Ala) + glycine + H(+). It catalyses the reaction a D-aminoacyl-tRNA + H2O = a tRNA + a D-alpha-amino acid + H(+). In terms of biological role, an aminoacyl-tRNA editing enzyme that deacylates mischarged D-aminoacyl-tRNAs. Also deacylates mischarged glycyl-tRNA(Ala), protecting cells against glycine mischarging by AlaRS. Acts via tRNA-based rather than protein-based catalysis; rejects L-amino acids rather than detecting D-amino acids in the active site. By recycling D-aminoacyl-tRNA to D-amino acids and free tRNA molecules, this enzyme counteracts the toxicity associated with the formation of D-aminoacyl-tRNA entities in vivo and helps enforce protein L-homochirality. The chain is D-aminoacyl-tRNA deacylase from Porphyromonas gingivalis (strain ATCC 33277 / DSM 20709 / CIP 103683 / JCM 12257 / NCTC 11834 / 2561).